The following is a 231-amino-acid chain: Cutinase 2 (231 aa).

The signal sequence occupies residues 1-16 (MKFFALTTLLAATASA). A disulfide bridge links Cys48 with Cys126. Catalysis depends on Ser137, which acts as the Nucleophile. Cys188 and Cys195 form a disulfide bridge. Asp192 is a catalytic residue. The active-site Proton donor/acceptor is His205.

Belongs to the cutinase family. In terms of processing, the 2 disulfide bonds play a critical role in holding the catalytic residues in juxta-position; reduction of the disulfide bridges results in the complete inactivation of the enzyme.

It is found in the secreted. It catalyses the reaction cutin + H2O = cutin monomers.. Its function is as follows. Catalyzes the hydrolysis of complex carboxylic polyesters found in the cell wall of plants. Degrades cutin, a macromolecule that forms the structure of the plant cuticle. Allows pathogenic fungi to penetrate through the cuticular barrier into the host plant during the initial stage of fungal infection. The polypeptide is Cutinase 2 (CUT2) (Fusarium vanettenii (Neocosmospora pisi)).